A 540-amino-acid chain; its full sequence is DM7 family protein GM11956 (540 aa).

The disordered stretch occupies residues 416 to 443 (ATDTRGRDEIRTSCDQPQEKDEGSAEAD). Residues 417-443 (TDTRGRDEIRTSCDQPQEKDEGSAEAD) are compositionally biased toward basic and acidic residues.

This sequence belongs to the DM7 family.

The sequence is that of DM7 family protein GM11956 from Drosophila sechellia (Fruit fly).